The primary structure comprises 459 residues: Protein maelstrom (459 aa).

A DNA-binding region (HMG box) is located at residues 2–69 (APKKHSGFMM…AQRAKRESSN (68 aa)). Residues 43 to 78 (NTQQRGPYNSGGKDANVAQRAKRESSNGHGQVDKAQ) are disordered. Basic and acidic residues predominate over residues 63–78 (AKRESSNGHGQVDKAQ).

It belongs to the maelstrom family. In terms of tissue distribution, in germaria and egg chambers, it is detected in the germline. In the germarium, it is in all regions, including region I where the germ cells are dividing. In early egg chambers, it is uniformly distributed throughout the nurse cells and oocyte but, by stage 5, it is most concentrated around the outer margins of the cells, closest to the periphery of the egg chamber. Level decreases in stages 5 and 6, but most noticeably in the oocyte, where protein level remains. No detectable protein from stage 8 onward (at protein level).

The protein resides in the cytoplasm. Its subcellular location is the nucleus. It is found in the perinuclear region. It localises to the cytoplasmic ribonucleoprotein granule. In terms of biological role, involved both in the piRNA and miRNA metabolic processes. As a component of the meiotic nuage, plays a central role during oogenesis by repressing transposable elements and preventing their mobilization, which is essential for the germline integrity. Repression of transposable elements is mediated via the piRNA metabolic process, which mediates the repression of transposable elements during meiosis by forming complexes composed of piRNAs and Piwi proteins and governs the repression of transposons. As a nuclear component, it is required for proper differentiation in the germline stem cell (GSC) lineage by repressing microRNA-7 (miR-7), thereby acting as an indirect regulator of bag-of-marbles (Bam). Acts by binding to the promoter of miR-7 gene and repressing its expression; miR-7 repression alleviates the Bam repression by miR-7, thereby allowing differentiation in the germline stem cell (GSC) lineage. Indirectly required to position the microtubule organizing center in stage 2-6 oocytes. Involved in repression of long interspersed nuclear elements (LINEs) including HeT-A, I-element, TART and possibly mst40 LINEs; may have a role in production of piwi-interacting RNA (piRNA). The polypeptide is Protein maelstrom (Drosophila melanogaster (Fruit fly)).